Here is a 369-residue protein sequence, read N- to C-terminus: MGQHVSNITVIATPQAPETKYLRVEYTGGYDDEYIRFFEAENIHSGDIGSEISPPFCLTRDTTVKQCASFLSPEAKKKFVIVPGEPCKSLSFRPGSILDLQKIPYGTESYVLDGTRCRFINIDYLYTDPDIKRCCNKESDKDCPEIFSNNYETDHCDTIMSSICLQTPGSLPCREWLEKKREVAFDTYMKVCSDHLDANYCSDFVDYTRPDNFGYSDAAILSYCSKHRNNPNCWCVTTPKNDKLFSLELALGPKVCWLHECTDKSKDRKYLLFDQDVQRTNCKYIGCNINVDTLRLRNSVAELIAKCGGSIAEDTVLGDDSYNKEAKLPSFFSIIPVCIVLLCLFVLFYFLRIYDAKVINSNTINVYRK.

Gly-2 carries the N-myristoyl glycine; by host lipid modification. The Virion surface segment spans residues 2–330; the sequence is GQHVSNITVI…SYNKEAKLPS (329 aa). The helical transmembrane segment at 331 to 351 threads the bilayer; the sequence is FFSIIPVCIVLLCLFVLFYFL. The Intravirion portion of the chain corresponds to 352-369; that stretch reads RIYDAKVINSNTINVYRK.

The protein belongs to the poxviridae A16/G9/J5 family. In terms of assembly, part of a stable entry-fusion complex (EFC) which is at least composed of proteins A16, A21, A28, G3, G9, H2, J5, and L5. Formation of the viral membrane is necessary for the assembly of the complex. Interacts with G9. In terms of processing, most cysteines are linked by disulfide bonds. They are created by the viral disulfide bond formation pathway, a poxvirus-specific redox pathway that operates on the cytoplasmic side of the MV membranes.

The protein resides in the virion membrane. In terms of biological role, envelope protein part of the entry-fusion complex responsible for the virus membrane fusion with host cell membrane during virus entry. Also plays a role in cell-cell fusion (syncytium formation). This Fowlpox virus (strain NVSL) (FPV) protein is Virion membrane protein A16 homolog.